The primary structure comprises 130 residues: DNA-directed RNA polymerase subunit omega (130 aa).

A disordered region spans residues 109-130 (EEELLKGLEGLAPPEEQPEEDE).

Belongs to the RNA polymerase subunit omega family. The RNAP catalytic core consists of 2 alpha, 1 beta, 1 beta' and 1 omega subunit. When a sigma factor is associated with the core the holoenzyme is formed, which can initiate transcription.

It carries out the reaction RNA(n) + a ribonucleoside 5'-triphosphate = RNA(n+1) + diphosphate. Functionally, promotes RNA polymerase assembly. Latches the N- and C-terminal regions of the beta' subunit thereby facilitating its interaction with the beta and alpha subunits. This chain is DNA-directed RNA polymerase subunit omega, found in Rhodopseudomonas palustris (strain BisB5).